The sequence spans 628 residues: Chaperone protein DnaK (628 aa).

A Phosphothreonine; by autocatalysis modification is found at threonine 195. The disordered stretch occupies residues glutamine 545 to glutamate 628. Basic and acidic residues predominate over residues aspartate 555–arginine 591. Residues alanine 596–glycine 612 show a composition bias toward low complexity. Residues lysine 614–glutamate 628 show a composition bias toward basic and acidic residues.

It belongs to the heat shock protein 70 family.

Acts as a chaperone. The protein is Chaperone protein DnaK of Deinococcus deserti (strain DSM 17065 / CIP 109153 / LMG 22923 / VCD115).